Reading from the N-terminus, the 63-residue chain is Muscarinic toxin 2 (63 aa).

4 disulfides stabilise this stretch: C3/C22, C17/C42, C44/C55, and C56/C61.

Belongs to the three-finger toxin family. Short-chain subfamily. Type B muscarinic toxin sub-subfamily. As to quaternary structure, monomer. Expressed by the venom gland.

Its subcellular location is the secreted. Blocks M2 muscarinic acetylcholine receptors (CHRM2). Fully blocks the binding of N-methylscopolamine (NMS) and oxotremorine-M to M2 receptors, slightly increased NMS binding to M1 receptors. This chain is Muscarinic toxin 2, found in Dendroaspis angusticeps (Eastern green mamba).